The following is a 358-amino-acid chain: tRNA-specific 2-thiouridylase MnmA (358 aa).

Residues 8 to 15 (GMSGGVDS) and M34 contribute to the ATP site. Residue C103 is the Nucleophile of the active site. The cysteines at positions 103 and 199 are disulfide-linked. G127 serves as a coordination point for ATP. The tract at residues 149–151 (KDQ) is interaction with tRNA. The active-site Cysteine persulfide intermediate is the C199. The interaction with tRNA stretch occupies residues 305–306 (RY).

This sequence belongs to the MnmA/TRMU family.

It is found in the cytoplasm. It catalyses the reaction S-sulfanyl-L-cysteinyl-[protein] + uridine(34) in tRNA + AH2 + ATP = 2-thiouridine(34) in tRNA + L-cysteinyl-[protein] + A + AMP + diphosphate + H(+). Functionally, catalyzes the 2-thiolation of uridine at the wobble position (U34) of tRNA, leading to the formation of s(2)U34. The chain is tRNA-specific 2-thiouridylase MnmA from Clostridium beijerinckii (strain ATCC 51743 / NCIMB 8052) (Clostridium acetobutylicum).